A 203-amino-acid polypeptide reads, in one-letter code: Small ribosomal subunit protein uS4 (203 aa).

The 61-residue stretch at 92–152 (LRLATVLLRA…EKSRKLVPFI (61 aa)) folds into the S4 RNA-binding domain.

It belongs to the universal ribosomal protein uS4 family. Part of the 30S ribosomal subunit. Contacts protein S5. The interaction surface between S4 and S5 is involved in control of translational fidelity.

Functionally, one of the primary rRNA binding proteins, it binds directly to 16S rRNA where it nucleates assembly of the body of the 30S subunit. Its function is as follows. With S5 and S12 plays an important role in translational accuracy. This Thermobifida fusca (strain YX) protein is Small ribosomal subunit protein uS4.